The sequence spans 831 residues: Translation initiation factor IF-2 (831 aa).

The tr-type G domain maps to 329–499 (TRAPVVTVMG…LLISEMQDLK (171 aa)). A G1 region spans residues 338–345 (GHVDHGKT). 338-345 (GHVDHGKT) lines the GTP pocket. Residues 363–367 (GITQH) form a G2 region. Positions 385 to 388 (DTPG) are G3. GTP is bound by residues 385 to 389 (DTPGH) and 439 to 442 (NKID). The tract at residues 439 to 442 (NKID) is G4. Residues 475–477 (SAL) are G5.

Belongs to the TRAFAC class translation factor GTPase superfamily. Classic translation factor GTPase family. IF-2 subfamily.

Its subcellular location is the cytoplasm. In terms of biological role, one of the essential components for the initiation of protein synthesis. Protects formylmethionyl-tRNA from spontaneous hydrolysis and promotes its binding to the 30S ribosomal subunits. Also involved in the hydrolysis of GTP during the formation of the 70S ribosomal complex. This is Translation initiation factor IF-2 from Rickettsia typhi (strain ATCC VR-144 / Wilmington).